The chain runs to 2211 residues: Nonribosomal peptide synthetase 13 (2211 aa).

The tract at residues 76 to 475 (TYAELDSLSD…IEHHLQLTLP (400 aa)) is adenylation 1. A Carrier 1 domain is found at 594 to 671 (PPSTPKEATI…EQSKRAGLIQ (78 aa)). S631 bears the O-(pantetheine 4'-phosphoryl)serine mark. A condensation 1 region spans residues 710-975 (EDIYPCTALQ…IATVPTRIRV (266 aa)). Residues 1169–1563 (TYRELWAHSS…LGAVEASVMR (395 aa)) are adenylation 2. In terms of domain architecture, Carrier 2 spans 1677–1756 (PMSDDNERRL…RSRHLITEQA (80 aa)). S1714 carries the O-(pantetheine 4'-phosphoryl)serine modification. The tract at residues 1814–2069 (HFQFDLSGAV…CTNYIPYRLS (256 aa)) is condensation 2.

It belongs to the NRP synthetase family.

It carries out the reaction L-proline + L-tryptophan + 2 ATP = brevianamide F + 2 AMP + 2 diphosphate + 2 H(+). The protein operates within mycotoxin biosynthesis. Functionally, nonribosomal peptide synthetase; part of the gene cluster that mediates the biosynthesis of fumitremorgins, indole alkaloids that carry not only intriguing chemical structures, but also interesting biological and pharmacological activities. The biosynthesis of fumitremorgin-type alkaloids begins by condensation of the two amino acids L-tryptophan and L-proline to brevianamide F, catalyzed by the non-ribosomal peptide synthetase ftmA. Brevianamide F is then prenylated by the prenyltransferase ftmPT1/ftmB in the presence of dimethylallyl diphosphate, resulting in the formation of tryprostatin B. The three cytochrome P450 monooxygenases, ftmP450-1/ftmC, ftmP450-2/ftmE and ftmP450-3/FtmG, are responsible for the conversion of tryprostatin B to 6-hydroxytryprostatin B, tryprostatin A to fumitremorgin C and fumitremorgin C to 12,13-dihydroxyfumitremorgin C, respectively. The putative methyltransferase ftmMT/ftmD is expected for the conversion of 6-hydroxytryprostatin B to tryprostatin A. FtmPT2/FtmH catalyzes the prenylation of 12,13-dihydroxyfumitre-morgin C in the presence of dimethylallyl diphosphate, resulting in the formation of fumitremorgin B. Fumitremorgin B is further converted to verruculogen by ftmOx1/ftmF via the insertion of an endoperoxide bond between the two prenyl moieties. In some fungal species, verruculogen is further converted to fumitremorgin A, but the enzymes involved in this step have not been identified yet. The protein is Nonribosomal peptide synthetase 13 of Aspergillus fumigatus (strain ATCC MYA-4609 / CBS 101355 / FGSC A1100 / Af293) (Neosartorya fumigata).